Reading from the N-terminus, the 195-residue chain is Molybdenum cofactor guanylyltransferase (195 aa).

GTP-binding positions include 12 to 14 (LAG), K25, N53, D70, and D100. A Mg(2+)-binding site is contributed by D100.

The protein belongs to the MobA family. Monomer. Mg(2+) is required as a cofactor.

The protein resides in the cytoplasm. It carries out the reaction Mo-molybdopterin + GTP + H(+) = Mo-molybdopterin guanine dinucleotide + diphosphate. In terms of biological role, transfers a GMP moiety from GTP to Mo-molybdopterin (Mo-MPT) cofactor (Moco or molybdenum cofactor) to form Mo-molybdopterin guanine dinucleotide (Mo-MGD) cofactor. This Vibrio campbellii (strain ATCC BAA-1116) protein is Molybdenum cofactor guanylyltransferase.